The sequence spans 221 residues: UPF0758 protein KPN78578_39390 (221 aa).

The region spanning 99 to 221 (ALVTPSMTRE…YVSFAERGWI (123 aa)) is the MPN domain. Residues H170, H172, and D183 each coordinate Zn(2+). The short motif at 170–183 (HNHPSGSPEPSQAD) is the JAMM motif element.

Belongs to the UPF0758 family. YicR subfamily.

In Klebsiella pneumoniae subsp. pneumoniae (strain ATCC 700721 / MGH 78578), this protein is UPF0758 protein KPN78578_39390.